Consider the following 83-residue polypeptide: Small ribosomal subunit protein eS21 (83 aa).

Met-1 is subject to N-acetylmethionine. Residue Lys-41 forms a Glycyl lysine isopeptide (Lys-Gly) (interchain with G-Cter in SUMO2) linkage. Position 81 is an N6-acetyllysine (Lys-81).

Belongs to the eukaryotic ribosomal protein eS21 family. As to quaternary structure, component of the 40S small ribosomal subunit.

It localises to the cytoplasm. The protein resides in the cytosol. The protein localises to the rough endoplasmic reticulum. Its function is as follows. Component of the small ribosomal subunit. The ribosome is a large ribonucleoprotein complex responsible for the synthesis of proteins in the cell. This Sus scrofa (Pig) protein is Small ribosomal subunit protein eS21 (RPS21).